We begin with the raw amino-acid sequence, 480 residues long: Flotillin-like protein 2 (480 aa).

A lipid anchor (S-palmitoyl cysteine) is attached at Cys-37. Residues 237 to 257 (ENQREAEVAQANSELAKKKAA) adopt a coiled-coil conformation.

This sequence belongs to the band 7/mec-2 family. Flotillin subfamily. In terms of processing, may be palmitoylated. In terms of tissue distribution, expressed in flowers in green pods. Primarily expressed in vascular tissues. Upon induction of nodulation, expansion of expression in the root cortex in the region of elongating root hairs, which will eventually become colonized by bacteria. Expressed in the infection zone in nodules.

The protein resides in the cell membrane. It is found in the membrane. It localises to the caveola. In terms of biological role, may act as a scaffolding protein within caveolar membranes, functionally participating in formation of caveolae or caveolae-like vesicles. Required for early symbiotic events and nodules formation. This Medicago truncatula (Barrel medic) protein is Flotillin-like protein 2 (FLOT2).